The primary structure comprises 112 residues: Large ribosomal subunit protein uL22 (112 aa).

Belongs to the universal ribosomal protein uL22 family. As to quaternary structure, part of the 50S ribosomal subunit.

Its function is as follows. This protein binds specifically to 23S rRNA; its binding is stimulated by other ribosomal proteins, e.g. L4, L17, and L20. It is important during the early stages of 50S assembly. It makes multiple contacts with different domains of the 23S rRNA in the assembled 50S subunit and ribosome. The globular domain of the protein is located near the polypeptide exit tunnel on the outside of the subunit, while an extended beta-hairpin is found that lines the wall of the exit tunnel in the center of the 70S ribosome. The chain is Large ribosomal subunit protein uL22 from Sulfurovum sp. (strain NBC37-1).